The primary structure comprises 677 residues: Bargin (677 aa).

Composition is skewed to low complexity over residues 1–13 (MDRG…TPAV) and 29–39 (APHAAAGPDGQ). Disordered stretches follow at residues 1-39 (MDRG…PDGQ) and 168-190 (SQAT…HSHT). The 246-residue stretch at 25 to 270 (EEAAAPHAAA…RENHGQADHS (246 aa)) folds into the BAR domain. 3 positions are modified to phosphoserine: S183, S270, and S272. The Rho-GAP domain maps to 284–477 (VSLATHLQEL…ALIQSADTLF (194 aa)). The interval 504–577 (SEELPSTAVP…DMARRSTGSL (74 aa)) is disordered. Residues 516–530 (ATTPAPAPAPAPAPA) are compositionally biased toward pro residues. Phosphoserine occurs at positions 552 and 558. The segment at 574-677 (TGSLAAAVET…IADLTEGLED (104 aa)) is mediates non-covalent binding of poly-ubiquitin chains.

As to expression, expressed in brain (at protein level).

The protein resides in the cell membrane. Its subcellular location is the cytoplasm. It localises to the cytosol. Functionally, GTPase activating protein (GAP) which specifically converts GTP-bound RAC1 and CDC42 in their inactive GDP-bound form. The GAP activity is enhanced by the non-covalent binding of K-29 and K-48 polyubiquitin chains. The protein is Bargin of Homo sapiens (Human).